The primary structure comprises 331 residues: MCSIQIIGAQSIGVCYGKAANNLPSDQDVINLYNANGIRKLRIYYPDKNIFKALNGSNIEIILGVPNQDLEALANSSIANGWVQDNIRSHFPYVKFKYISIGNKVSPTNNDQYSEFLLQAMKNVYNALAAAGLQDMIKVSTVTYSGVLANTYPPERSIFREEFKSFINPIIQFLARNNLPLLANVYPYFVHVSNTADVSLSYALFTQQGTNSAGYQNLFDAILDSMYFAVEKAGGPNVEIIVSESGWPSEGSSAATIENAQTYYRNLINHVKSGAGTPKKPGKTIETYLFAMFDENDKIGEITEKHFGLFSPDQRAKYQLNFNYLPIYILR.

A signal peptide spans 1-9 (MCSIQIIGA). Residue Gln-10 is modified to Pyrrolidone carboxylic acid. N-linked (GlcNAc...) asparagine glycosylation is found at Asn-55 and Asn-75. Glu-244 serves as the catalytic Nucleophile.

This sequence belongs to the glycosyl hydrolase 17 family. As to expression, is expressed primarily in epidermal cell of healthy plant, and following induction by ethylene, accumulates in mesophyll cells.

The protein localises to the secreted. It localises to the extracellular space. It carries out the reaction Hydrolysis of (1-&gt;3)-beta-D-glucosidic linkages in (1-&gt;3)-beta-D-glucans.. Its function is as follows. Is thought to be an important plant defense-related product against fungal pathogens. This Nicotiana tabacum (Common tobacco) protein is Glucan endo-1,3-beta-glucosidase, acidic isoform GL161.